We begin with the raw amino-acid sequence, 348 residues long: Large ribosomal subunit protein uL3m (348 aa).

The transit peptide at 1–40 (MPGWRLLTQVGAQVLGRLGDGLGAALGPGNRTHIWLFVRG) directs the protein to the mitochondrion.

This sequence belongs to the universal ribosomal protein uL3 family. As to quaternary structure, component of the mitochondrial large ribosomal subunit (mt-LSU). Mature mammalian 55S mitochondrial ribosomes consist of a small (28S) and a large (39S) subunit. The 28S small subunit contains a 12S ribosomal RNA (12S mt-rRNA) and 30 different proteins. The 39S large subunit contains a 16S rRNA (16S mt-rRNA), a copy of mitochondrial valine transfer RNA (mt-tRNA(Val)), which plays an integral structural role, and 52 different proteins.

The protein localises to the mitochondrion. This is Large ribosomal subunit protein uL3m (MRPL3) from Homo sapiens (Human).